The following is a 330-amino-acid chain: Serine/threonine-protein phosphatase PP1-alpha catalytic subunit (330 aa).

S2 carries the post-translational modification N-acetylserine. 2 positions are modified to phosphoserine: S2 and S22. D64, H66, D92, and N124 together coordinate Mn(2+). H125 acts as the Proton donor in catalysis. H173 and H248 together coordinate Mn(2+). An N6-acetyllysine modification is found at K305. Y306 is subject to Phosphotyrosine. The segment at Y306 to K330 is disordered. Phosphothreonine is present on T320. S325 is subject to Phosphoserine.

This sequence belongs to the PPP phosphatase family. PP-1 subfamily. PP1 comprises a catalytic subunit, PPP1CA, PPP1CB or PPP1CC, which is folded into its native form by inhibitor 2 and glycogen synthetase kinase 3, and then complexed to one or several targeting or regulatory subunits. PPP1R12A, PPP1R12B and PPP1R12C mediate binding to myosin. PPP1R3A (in skeletal muscle), PPP1R3B (in liver), PPP1R3C, PPP1R3D and PPP1R3F (in brain) mediate binding to glycogen. Interacts with PPP1R39. Interacts with BTBD10. Interacts with KCTD20. Interacts with PPP1R9A and PPP1R9B. Part of a complex containing PPP1R15B, PP1 and NCK1/2. Interacts with PHACTR4; which acts as an activator of PP1 activity. Interacts with PPP1R15A and PPP1R15B; the interactions mediate binding to EIF2S1. Interacts with PPP1R7. Interacts with YLPM1. Forms a complex with ILF2, ILF3, YLPM1, KHDRBS1, RBMX and NCOA5. Interacts with NOM1 and PPP1R8. Interacts with PPP1R16B. Interacts with RPSA only in the presence of PPP1R16B. Component of the PNUTS-PP1 phosphatase complex, composed of PPP1R10/PNUTS, TOX4, WDR82, and PPP1CA or PPP1CB or PPP1CC. Interacts with PPP1R10/PNUTS and PPP1R8. Interacts with WDR82 in the presence of PPP1R10/PNUTS. Interacts with TRIM28; the interaction dephosphorylates TRIM28 on 'Ser-824' and forms a complex at the p21 promoter site. Interacts with isoform 1 and isoform 4 of NEK2. Interacts with FER; this promotes phosphorylation at Thr-320. Interacts with DAB2; the interaction is mutually exclusive with the AXIN1:PPP1CA interaction. Interacts with FOXP3. Interacts with CENPA. Interacts with ATG16L1. Found in a complex with PPP1CA, PPP1CC, SHC1 and PEAK1. Interacts with tensin TNS1. Interacts with SAXO4, PPP1R21, PPP1R26, PPP1R27, PPP1R35, PPP1R36, PPP1R37, SH3RF2, ELFN1 and ELFN2. Interacts with TPRN; the interaction results in inhibition of PPC1A phosphatase activity. Interacts with SKA1 (via C-terminus); the interaction is direct and required for the recruitment of PP1 to the kinetochore. Interacts with the KNL1 complex subunit KNL1; the interaction is direct and mutually exclusive with KNL1 binding to microtubules. Component of the SHOC2-MRAS-PP1c (SMP) complex consisting of SHOC2, GTP-bound M-Ras/MRAS and the catalytic subunit of protein phosphatase 1 (either PPP1CA, PPP1CB or PPP1CC). SHOC2 and PP1c preferably bind M-Ras/MRAS, but they also bind K-Ras/KRAS, N-Ras/NRAS and H-Ras/HRAS; these interactions are GTP-dependent and both SHOC2 and PP1c are required to form a stable complex. Interacts with SHOC2 in the absence of Ras GTPases. As to quaternary structure, (Microbial infection) Interacts with HHV-1 ICP34.5. In terms of assembly, (Microbial infection) Interacts with Venezuelan equine encephalitis virus (VEEV) capsid protein; this interaction dephosphorylates the capsid protein, which increases its ability to bind to the viral genome. Fe cation serves as cofactor. Mn(2+) is required as a cofactor. Phosphorylated. Dephosphorylated at Thr-320 in the presence of ionizing radiation.

The protein resides in the cytoplasm. It is found in the nucleus. It localises to the nucleoplasm. Its subcellular location is the nucleolus. It carries out the reaction O-phospho-L-seryl-[protein] + H2O = L-seryl-[protein] + phosphate. The catalysed reaction is O-phospho-L-threonyl-[protein] + H2O = L-threonyl-[protein] + phosphate. Its activity is regulated as follows. The phosphatase activity of the PPP1R15A-PP1 complex toward EIF2S1 is specifically inhibited by Salubrinal, a drug that protects cells from endoplasmic reticulum stress. Protein phosphatase that associates with over 200 regulatory proteins to form highly specific holoenzymes which dephosphorylate hundreds of biological targets. Protein phosphatase 1 (PP1) is essential for cell division, transcription elongation, and participates in the regulation of glycogen metabolism, muscle contractility and protein synthesis. Involved in regulation of ionic conductances and long-term synaptic plasticity. May play an important role in dephosphorylating substrates such as the postsynaptic density-associated Ca(2+)/calmodulin dependent protein kinase II. Catalytic component of the PNUTS-PP1 protein phosphatase complex, a protein phosphatase 1 (PP1) complex that promotes RNA polymerase II transcription pause-release, allowing transcription elongation: the PNUTS-PP1 complex mediates the release of RNA polymerase II from promoter-proximal region of genes by catalyzing dephosphorylation of proteins involved in transcription, such as AFF4, CDK9, MEPCE, INTS12, NCBP1, POLR2M/GDOWN1 and SUPT6H. The PNUTS-PP1 complex also regulates transcription termination by mediating dephosphorylation of SUPT5H in termination zones downstream of poly(A) sites, thereby promoting deceleration of RNA polymerase II transcription. PNUTS-PP1 complex is also involved in the response to replication stress by mediating dephosphorylation of POLR2A at 'Ser-5' of the CTD, promoting RNA polymerase II degradation. PNUTS-PP1 also plays a role in the control of chromatin structure and cell cycle progression during the transition from mitosis into interphase. Regulates NEK2 function in terms of kinase activity and centrosome number and splitting, both in the presence and absence of radiation-induced DNA damage. Regulator of neural tube and optic fissure closure, and enteric neural crest cell (ENCCs) migration during development. In balance with CSNK1D and CSNK1E, determines the circadian period length, through the regulation of the speed and rhythmicity of PER1 and PER2 phosphorylation. May dephosphorylate CSNK1D and CSNK1E. Dephosphorylates the 'Ser-418' residue of FOXP3 in regulatory T-cells (Treg) from patients with rheumatoid arthritis, thereby inactivating FOXP3 and rendering Treg cells functionally defective. Dephosphorylates CENPA. Dephosphorylates the 'Ser-139' residue of ATG16L1 causing dissociation of ATG12-ATG5-ATG16L1 complex, thereby inhibiting autophagy. Together with PPP1CC (PP1-gamma subunit), dephosphorylates IFIH1/MDA5 and RIG-I leading to their activation and a functional innate immune response. Core component of the SHOC2-MRAS-PP1c (SMP) holophosphatase complex that regulates the MAPK pathway activation. The SMP complex specifically dephosphorylates the inhibitory phosphorylation at 'Ser-259' of RAF1 kinase, 'Ser-365' of BRAF kinase and 'Ser-214' of ARAF kinase, stimulating their kinase activities. The SMP complex enhances the dephosphorylation activity and substrate specificity of PP1c. Its function is as follows. (Microbial infection) Necessary for alphaviruses replication. The sequence is that of Serine/threonine-protein phosphatase PP1-alpha catalytic subunit (PPP1CA) from Homo sapiens (Human).